The primary structure comprises 769 residues: TSC22 domain family protein 2 (769 aa).

Disordered regions lie at residues 20-86, 224-292, 334-353, and 520-563; these read AQVA…TVSP, HGLD…PQPM, AQPGPAGGSSLSQQFAYPQP, and VPAP…SLPQ. A compositionally biased stretch (acidic residues) spans 28-37; sequence EDTESLDDPD. The segment covering 229 to 252 has biased composition (polar residues); the sequence is GTDSSLTAVSQLPPSEKMSQPTLA. Positions 269–279 are enriched in low complexity; sequence GGAVAPSSASL. Residues 531–541 are compositionally biased toward low complexity; it reads SSHTPVSRSSS. Positions 542–563 are enriched in polar residues; that stretch reads VIQQVGSPLAQGTHSAPTSLPQ. A coiled-coil region spans residues 691–725; the sequence is MYAVREEVEVLKEQIKELVERNSLLERENALLKSL. Residues 726 to 745 show a composition bias toward polar residues; that stretch reads SNNDQLSQLPAQQANPGSTS. Positions 726–769 are disordered; the sequence is SNNDQLSQLPAQQANPGSTSQQQAMIAQPPQPTQPPQQPNVSSA. Pro residues predominate over residues 754–763; sequence PPQPTQPPQQ.

This sequence belongs to the TSC-22/Dip/Bun family. Interacts with NRBP1. Interacts with PKM isoform M2; the interaction results in reduced nuclear levels of PKM isoform M2, leading to repression of cyclin CCND1 transcription and reduced cell growth. Interacts with WDR77. As to expression, expressed in the cortex, medulla and papilla of the kidney. Expressed in the kidney.

Its function is as follows. Reduces the level of nuclear PKM isoform M2 which results in repression of cyclin CCND1 transcription and reduced cell growth. In terms of biological role, may protect kidney cells from hyperosmotic stress. The protein is TSC22 domain family protein 2 of Mus musculus (Mouse).